A 147-amino-acid polypeptide reads, in one-letter code: Hemoglobin subunit gamma (147 aa).

One can recognise a Globin domain in the interval 3–147; the sequence is NFTAEDKAAI…VASALASRYH (145 aa). 2 residues coordinate heme b: His-64 and His-93.

The protein belongs to the globin family. As to quaternary structure, heterotetramer of two alpha chains and two gamma chains in fetal hemoglobin (Hb F). In terms of tissue distribution, red blood cells.

Its function is as follows. Gamma chains make up the fetal hemoglobin F, in combination with alpha chains. The chain is Hemoglobin subunit gamma (HBG1) from Callithrix jacchus (White-tufted-ear marmoset).